Reading from the N-terminus, the 492-residue chain is Catalase isozyme 2 (492 aa).

Active-site residues include histidine 65 and asparagine 138. Tyrosine 348 is a binding site for heme.

The protein belongs to the catalase family. Homotetramer. Requires heme as cofactor.

It localises to the peroxisome. Its subcellular location is the glyoxysome. The catalysed reaction is 2 H2O2 = O2 + 2 H2O. Functionally, occurs in almost all aerobically respiring organisms and serves to protect cells from the toxic effects of hydrogen peroxide. This chain is Catalase isozyme 2 (CAT2), found in Solanum tuberosum (Potato).